Here is a 29-residue protein sequence, read N- to C-terminus: Cyclotide vibi-D (29 aa).

The segment at residues 1–29 (GLPVCGETCFGGRCNTPGCTCSYPICTRN) is a cross-link (cyclopeptide (Gly-Asn)). Cystine bridges form between C5–C19, C9–C21, and C14–C26.

In terms of processing, this is a cyclic peptide.

Functionally, probably participates in a plant defense mechanism. Has moderate levels of cytotoxic activity, active against a human lymphoma cell line with an IC(50) of &gt;30 uM. This Viola biflora (Yellow wood violet) protein is Cyclotide vibi-D.